Consider the following 90-residue polypeptide: UPF0237 protein PAE3582 (90 aa).

The region spanning 5 to 74 (VVSVLGADRV…LEEEGKRLGV (70 aa)) is the ACT domain.

It belongs to the UPF0237 family.

The polypeptide is UPF0237 protein PAE3582 (Pyrobaculum aerophilum (strain ATCC 51768 / DSM 7523 / JCM 9630 / CIP 104966 / NBRC 100827 / IM2)).